The sequence spans 195 residues: UPF0301 protein Bpro_1142 (195 aa).

The protein belongs to the UPF0301 (AlgH) family.

The chain is UPF0301 protein Bpro_1142 from Polaromonas sp. (strain JS666 / ATCC BAA-500).